A 393-amino-acid chain; its full sequence is S-adenosylmethionine synthase (393 aa).

Histidine 16 is an ATP binding site. Aspartate 18 contacts Mg(2+). A K(+)-binding site is contributed by glutamate 44. L-methionine is bound by residues glutamate 57 and glutamine 100. The segment at 100–110 is flexible loop; sequence QSPDIVMGVDG. ATP-binding positions include 165–167, 231–232, aspartate 240, 246–247, and lysine 267; these read DAK, RF, and RK. Aspartate 240 provides a ligand contact to L-methionine. Position 271 (lysine 271) interacts with L-methionine.

This sequence belongs to the AdoMet synthase family. As to quaternary structure, homotetramer; dimer of dimers. Requires Mg(2+) as cofactor. The cofactor is K(+).

It is found in the cytoplasm. The enzyme catalyses L-methionine + ATP + H2O = S-adenosyl-L-methionine + phosphate + diphosphate. Its pathway is amino-acid biosynthesis; S-adenosyl-L-methionine biosynthesis; S-adenosyl-L-methionine from L-methionine: step 1/1. Its function is as follows. Catalyzes the formation of S-adenosylmethionine (AdoMet) from methionine and ATP. The overall synthetic reaction is composed of two sequential steps, AdoMet formation and the subsequent tripolyphosphate hydrolysis which occurs prior to release of AdoMet from the enzyme. This is S-adenosylmethionine synthase from Coxiella burnetii (strain Dugway 5J108-111).